The chain runs to 692 residues: Ribonuclease J (692 aa).

A disordered region spans residues 1–91 (MTDNNQNNEN…RNYAKEELDN (91 aa)). Basic and acidic residues predominate over residues 9–25 (ENHENSSENSKDHHEAR). Positions 57–79 (HHKKEHRPNKKPNNHHKPKHASQ) are enriched in basic residues. An N6-acetyllysine mark is found at lysine 135 and lysine 141. The Zn(2+) site is built by histidine 209, histidine 211, aspartate 213, histidine 214, histidine 278, and aspartate 300. Residues lysine 324, lysine 338, and lysine 398 each carry the N6-acetyllysine modification. 501-505 (HVSGH) provides a ligand contact to substrate. An N6-acetyllysine modification is found at lysine 512. Residue histidine 527 participates in Zn(2+) binding. N6-acetyllysine occurs at positions 548, 635, and 650.

This sequence belongs to the metallo-beta-lactamase superfamily. RNA-metabolizing metallo-beta-lactamase-like family. Bacterial RNase J subfamily. As to quaternary structure, homodimer. Homotetramer; dimer of homodimers. Interacts with RNA helicase RhpA, might be a member of a minimal RNA degradosome complex. Requires Zn(2+) as cofactor. Acetylated on nine lysine residues. Some of the residues are acetylated by multiple different mechanisms. RimL is partially responsible for the acetylation of Lys-324, Lys-398 and Lys-650. HPB8_1270 homolog is partially responsible for the acetylation of Lys-324, Lys-398, Lys-512 and Lys-650. Acetyl-phosphate-mediated non-enzymatic acetylation pathway takes part in the acetylation of Lys-135, Lys-324, Lys-398, Lys-512 and Lys-650. Acetylation of the remaining residues Lys-141, Lys-338, Lys-548 and Lys-635 occurs by a yet undetermined mechanism. Acetylation on a number of these residues is important for growth regulation and proper cell morphology.

The protein resides in the cytoplasm. Its activity is regulated as follows. Catalytic activity is regulated by the balance between homodimers and homotetramers, with homotetramers being the active forms of this enzyme. Acetylation allosterically regulates the homooligomerization state and hence the catalytic activity. An RNase that has 5'-3' exoribonuclease and endoribonuclease activity. Degrades 5'-monophosphorylated ssRNA and dsRNA, considerably more active on ssRNA. Association with RhpA significantly increases the dsRNase activity. Degrades RNA substrate with hairpin structures at both ends with low activity, but presence of RhpA significantly increases the activity on this substrate. Stimulates ATPase activity of RNA helicase RhpA. Involved in stabilization of mRNA but apparently not rRNA. This Helicobacter pylori (strain J99 / ATCC 700824) (Campylobacter pylori J99) protein is Ribonuclease J.